A 128-amino-acid polypeptide reads, in one-letter code: Ribonuclease pancreatic B (128 aa).

The disordered stretch occupies residues 1–21 (AESSAMKFQRQHMDPEGSPSN). The substrate site is built by K7 and R10. Catalysis depends on H12, which acts as the Proton acceptor. Residues N21 and N34 are each glycosylated (N-linked (GlcNAc...) asparagine). Intrachain disulfides connect C26/C84, C40/C95, C58/C110, and C65/C72. Substrate-binding positions include 41-45 (KPVNT), K66, and R85. The active-site Proton donor is H119.

It belongs to the pancreatic ribonuclease family. As to expression, pancreas.

The protein localises to the secreted. It catalyses the reaction an [RNA] containing cytidine + H2O = an [RNA]-3'-cytidine-3'-phosphate + a 5'-hydroxy-ribonucleotide-3'-[RNA].. The catalysed reaction is an [RNA] containing uridine + H2O = an [RNA]-3'-uridine-3'-phosphate + a 5'-hydroxy-ribonucleotide-3'-[RNA].. This chain is Ribonuclease pancreatic B, found in Cavia porcellus (Guinea pig).